The primary structure comprises 397 residues: Lysophospholipid transporter LplT (397 aa).

Topologically, residues 1–17 are periplasmic; it reads MSESVHTNTSLWSKGMK. Residues 18 to 38 traverse the membrane as a helical segment; that stretch reads AVIVAQFLSAFGDNALLFATL. The Cytoplasmic segment spans residues 39–52; sequence ALLKAQFYPEWSQP. The chain crosses the membrane as a helical span at residues 53 to 73; that stretch reads ILQMVFVGAYILFAPFVGQVA. Residues 74 to 90 lie on the Periplasmic side of the membrane; sequence DSFAKGRVMMFANGLKL. A helical membrane pass occupies residues 91–111; it reads LGAASICFGINPFLGYTLVGV. At 112–144 the chain is on the cytoplasmic side; that stretch reads GAAAYSPAKYGILGELTTGSKLVKANGLMEAST. The helical transmembrane segment at 145 to 165 threads the bilayer; it reads IAAILLGSVAGGVLADWHVLV. Residue A166 is a topological domain, periplasmic. The chain crosses the membrane as a helical span at residues 167-187; that stretch reads LAACALAYGGAVVANIYIPKL. Residues 188-226 lie on the Cytoplasmic side of the membrane; it reads AAARPGQSWNLINMTRSFLNACTSLWRNGETRFSLVGTS. A helical transmembrane segment spans residues 227-247; it reads LFWGAGVTLRFLLVLWVPVAL. The Periplasmic portion of the chain corresponds to 248–256; sequence GITDNATPT. The chain crosses the membrane as a helical span at residues 257–277; the sequence is YLNAMVAIGIVVGAGAAAKLV. At 278 to 280 the chain is on the cytoplasmic side; the sequence is TLE. The helical transmembrane segment at 281–301 threads the bilayer; that stretch reads TVSRCMPAGILIGVVVLIFSL. The Periplasmic portion of the chain corresponds to 302–304; that stretch reads QHE. A helical membrane pass occupies residues 305–325; the sequence is QLPAYALLMLIGVLGGFFVVP. The Cytoplasmic segment spans residues 326–343; sequence LNALLQERGKKSVGAGNA. A helical membrane pass occupies residues 344–364; the sequence is IAVQNLGENSAMLLMLGIYSL. The Periplasmic portion of the chain corresponds to 365–366; that stretch reads AV. The helical transmembrane segment at 367–387 threads the bilayer; sequence MVGIPVVPIGIGFGALFALAI. Residues 388–397 are Cytoplasmic-facing; the sequence is TALWIWQRRH.

The protein belongs to the major facilitator superfamily. LplT (TC 2.A.1.42) family.

Its subcellular location is the cell inner membrane. Its function is as follows. Catalyzes the facilitated diffusion of 2-acyl-glycero-3-phosphoethanolamine (2-acyl-GPE) into the cell. The polypeptide is Lysophospholipid transporter LplT (Escherichia coli O157:H7 (strain EC4115 / EHEC)).